The primary structure comprises 415 residues: Serine hydroxymethyltransferase (415 aa).

Residues Leu117 and 121 to 123 contribute to the (6S)-5,6,7,8-tetrahydrofolate site; that span reads GHL. The residue at position 226 (Lys226) is an N6-(pyridoxal phosphate)lysine. Residue Glu241 coordinates (6S)-5,6,7,8-tetrahydrofolate.

It belongs to the SHMT family. In terms of assembly, homodimer. It depends on pyridoxal 5'-phosphate as a cofactor.

The protein resides in the cytoplasm. It catalyses the reaction (6R)-5,10-methylene-5,6,7,8-tetrahydrofolate + glycine + H2O = (6S)-5,6,7,8-tetrahydrofolate + L-serine. It functions in the pathway one-carbon metabolism; tetrahydrofolate interconversion. Its pathway is amino-acid biosynthesis; glycine biosynthesis; glycine from L-serine: step 1/1. Catalyzes the reversible interconversion of serine and glycine with tetrahydrofolate (THF) serving as the one-carbon carrier. This reaction serves as the major source of one-carbon groups required for the biosynthesis of purines, thymidylate, methionine, and other important biomolecules. Also exhibits THF-independent aldolase activity toward beta-hydroxyamino acids, producing glycine and aldehydes, via a retro-aldol mechanism. The sequence is that of Serine hydroxymethyltransferase from Bacillus pumilus (strain SAFR-032).